The primary structure comprises 186 residues: ATP synthase subunit b (186 aa).

A helical membrane pass occupies residues 5 to 25 (LILNLLVLLAPAAVFAAGGGH).

Belongs to the ATPase B chain family. As to quaternary structure, F-type ATPases have 2 components, F(1) - the catalytic core - and F(0) - the membrane proton channel. F(1) has five subunits: alpha(3), beta(3), gamma(1), delta(1), epsilon(1). F(0) has three main subunits: a(1), b(2) and c(10-14). The alpha and beta chains form an alternating ring which encloses part of the gamma chain. F(1) is attached to F(0) by a central stalk formed by the gamma and epsilon chains, while a peripheral stalk is formed by the delta and b chains.

The protein localises to the cell inner membrane. Its function is as follows. F(1)F(0) ATP synthase produces ATP from ADP in the presence of a proton or sodium gradient. F-type ATPases consist of two structural domains, F(1) containing the extramembraneous catalytic core and F(0) containing the membrane proton channel, linked together by a central stalk and a peripheral stalk. During catalysis, ATP synthesis in the catalytic domain of F(1) is coupled via a rotary mechanism of the central stalk subunits to proton translocation. In terms of biological role, component of the F(0) channel, it forms part of the peripheral stalk, linking F(1) to F(0). This Bdellovibrio bacteriovorus (strain ATCC 15356 / DSM 50701 / NCIMB 9529 / HD100) protein is ATP synthase subunit b.